The chain runs to 117 residues: Eukaryotic translation initiation factor 4E-binding protein 1 (117 aa).

2 stretches are compositionally biased toward polar residues: residues 1–12 (MSAGSSCSQTPS) and 33–47 (YSTTPGGTLFSTTPG). Residues 1-47 (MSAGSSCSQTPSRAIPTRRVALGDGVQLPPGDYSTTPGGTLFSTTPG) form a disordered region. Ser-2 bears the N-acetylserine mark. A phosphothreonine mark is found at Thr-36 and Thr-40. The residue at position 43 (Ser-43) is a Phosphoserine. Phosphothreonine; by MTOR is present on Thr-45. The residue at position 49 (Thr-49) is a Phosphothreonine. Tyr-53 bears the Phosphotyrosine mark. The YXXXXLphi motif motif lies at 53–59 (YDRKFLM). A Glycyl lysine isopeptide (Lys-Gly) (interchain with G-Cter in ubiquitin) cross-link involves residue Lys-56. Ser-64 bears the Phosphoserine; by DYRK2, MAPK1, MAPK3 and MTOR mark. The segment at 64–117 (SPVAKTPPKDLPTIPGVTSPTSDEPPMQASQSHLHSSPEDKRAGGEESQFEMDI) is disordered. Thr-69 is modified (phosphothreonine; by MTOR). Position 76 is a phosphothreonine (Thr-76). Over residues 79-98 (GVTSPTSDEPPMQASQSHLH) the composition is skewed to polar residues. 3 positions are modified to phosphoserine: Ser-82, Ser-95, and Ser-99. Over residues 99 to 108 (SSPEDKRAGG) the composition is skewed to basic and acidic residues. Phosphoserine; by DYRK2 is present on Ser-100. Ser-111 carries the post-translational modification Phosphoserine. The short motif at 113–117 (FEMDI) is the TOS motif element.

It belongs to the eIF4E-binding protein family. In terms of assembly, hypophosphorylated EIF4EBP1 competes with EIF4G1/EIF4G3 to interact with EIF4E; insulin stimulated MAP-kinase (MAPK1 and MAPK3) or mTORC1 phosphorylation of EIF4EBP1 causes dissociation of the complex allowing EIF4G1/EIF4G3 to bind and consequent initiation of translation. Interacts (via TOS motif) with RPTOR; promoting phosphorylation by mTORC1. Phosphorylated on serine and threonine residues in response to insulin, EGF and PDGF. Phosphorylation at Thr-36, Thr-45, Ser-64 and Thr-69, corresponding to the hyperphosphorylated form, is regulated by mTORC1 and abolishes binding to EIF4E. Post-translationally, ubiquitinated: when eIF4E levels are low, hypophosphorylated form is ubiquitinated by the BCR(KLHL25) complex, leading to its degradation and serving as a homeostatic mechanism to maintain translation and prevent eIF4E inhibition when eIF4E levels are low. Not ubiquitinated when hyperphosphorylated (at Thr-36, Thr-45, Ser-64 and Thr-69) or associated with eIF4E. In terms of tissue distribution, expressed in all tissues examined; highest levels in fat and skeletal tissue, lowest levels in kidney.

It localises to the cytoplasm. Its subcellular location is the nucleus. In terms of biological role, repressor of translation initiation that regulates EIF4E activity by preventing its assembly into the eIF4F complex: hypophosphorylated form competes with EIF4G1/EIF4G3 and strongly binds to EIF4E, leading to repress translation. In contrast, hyperphosphorylated form dissociates from EIF4E, allowing interaction between EIF4G1/EIF4G3 and EIF4E, leading to initiation of translation. Mediates the regulation of protein translation by hormones, growth factors and other stimuli that signal through the MAP kinase and mTORC1 pathways. This is Eukaryotic translation initiation factor 4E-binding protein 1 (Eif4ebp1) from Rattus norvegicus (Rat).